The sequence spans 102 residues: Small ribosomal subunit protein uS10 (102 aa).

It belongs to the universal ribosomal protein uS10 family. As to quaternary structure, part of the 30S ribosomal subunit.

In terms of biological role, involved in the binding of tRNA to the ribosomes. This is Small ribosomal subunit protein uS10 from Phenylobacterium zucineum (strain HLK1).